Consider the following 902-residue polypeptide: Cysteine-tryptophan domain-containing zinc finger protein 3 (902 aa).

The CW-type zinc-finger motif lies at 21-74 (VLIEDNWVCCDMCHKWRLLPYGTNTSMLPKKWICSMLDWLPGMNKCDISEDETT). Positions 30, 33, 54, and 66 each coordinate Zn(2+). 4 disordered regions span residues 131–233 (EHDQ…EDRH), 326–345 (EDNRLSSMDHTSKGGDNENL), 420–480 (QSST…LNAD), and 537–651 (HGPT…SASP). 2 stretches are compositionally biased toward basic and acidic residues: residues 151 to 169 (KNREVVDSEHYTNDRDPVS) and 193 to 203 (SHSDGGDLTEK). Over residues 204-213 (SKKHSKSKNR) the composition is skewed to basic residues. 2 stretches are compositionally biased toward basic and acidic residues: residues 214–233 (RGIDRDEHKTSKKTKKEDRH) and 335–345 (HTSKGGDNENL). A compositionally biased stretch (low complexity) spans 421 to 433 (SSTVATSSSSKVS). Composition is skewed to polar residues over residues 450 to 463 (ESVSSSPLKNSNTD), 564 to 588 (NSAPSRQGRNGSSNLISEGNKQIEM), and 599 to 611 (IDNQDMQKSIGQD). A compositionally biased stretch (basic and acidic residues) spans 612–625 (NHSHMKEGKSEVHT). Over residues 634–648 (KNHTQLRSNVENGDS) the composition is skewed to polar residues.

As to expression, expressed in leaf sheaths, flag leaves, nodes, internodes and panicles.

The protein resides in the nucleus. Its function is as follows. Binds to histones H3K4me1, H3K4me2 and H3K4me3 in GST pull-down assay. May facilitate the recruitment of effectors to mediate gene expression. In Oryza sativa subsp. japonica (Rice), this protein is Cysteine-tryptophan domain-containing zinc finger protein 3.